Here is a 471-residue protein sequence, read N- to C-terminus: 8-amino-7-oxononanoate synthase (471 aa).

Arg-40 contributes to the substrate binding site. A pyridoxal 5'-phosphate-binding site is contributed by 131–132 (GY). Position 156 (His-156) interacts with substrate. Pyridoxal 5'-phosphate contacts are provided by Ser-202, His-230, and Thr-258. The residue at position 261 (Lys-261) is an N6-(pyridoxal phosphate)lysine. Substrate is bound at residue Thr-377. The segment at 409–471 (SEGQTRREAE…LGAARRETAA (63 aa)) is disordered.

It belongs to the class-II pyridoxal-phosphate-dependent aminotransferase family. BioF subfamily. Homodimer. Pyridoxal 5'-phosphate serves as cofactor.

The enzyme catalyses 6-carboxyhexanoyl-[ACP] + L-alanine + H(+) = (8S)-8-amino-7-oxononanoate + holo-[ACP] + CO2. It participates in cofactor biosynthesis; biotin biosynthesis. In terms of biological role, catalyzes the decarboxylative condensation of pimeloyl-[acyl-carrier protein] and L-alanine to produce 8-amino-7-oxononanoate (AON), [acyl-carrier protein], and carbon dioxide. This chain is 8-amino-7-oxononanoate synthase, found in Burkholderia ambifaria (strain ATCC BAA-244 / DSM 16087 / CCUG 44356 / LMG 19182 / AMMD) (Burkholderia cepacia (strain AMMD)).